The sequence spans 816 residues: Protein kinase C-binding protein NELL2 (816 aa).

Residues 1 to 21 (MESRVLLRTFCLIFGLGAVWG) form the signal peptide. Asn-53, Asn-225, Asn-293, and Asn-298 each carry an N-linked (GlcNAc...) asparagine glycan. The 165-residue stretch at 64-228 (PRSIKASTAT…AQCPDLNRTC (165 aa)) folds into the Laminin G-like domain. A VWFC 1 domain is found at 272–331 (RTCTMKGTTYREFESWIDGCKNCTCLNGTIQCETLICPNPDCPLKSALAYVDGKCCKECK). Residues 397–439 (GYDFCSERHNCMENSICRNLNDRAVCSCRDGFRALREDNAYCE) enclose the EGF-like 1 domain. 3 disulfide bridges follow: Cys-401-Cys-413, Cys-407-Cys-422, and Cys-424-Cys-438. Ca(2+) contacts are provided by Asp-440, Ile-441, and Glu-443. The 42-residue stretch at 440–481 (DIDECAEGRHYCRENTMCVNTPGSFMCICKTGYIRIDDYSCT) folds into the EGF-like 2; calcium-binding domain. Intrachain disulfides connect Cys-444-Cys-457, Cys-451-Cys-466, Cys-468-Cys-480, Cys-486-Cys-499, Cys-493-Cys-508, Cys-510-Cys-521, Cys-525-Cys-535, Cys-529-Cys-541, and Cys-543-Cys-552. 3 residues coordinate Ca(2+): Asn-459, Thr-460, and Ser-463. The EGF-like 3; calcium-binding domain occupies 482-522 (EHDECITNQHNCDENALCFNTVGGHNCVCKPGYTGNGTTCK). The N-linked (GlcNAc...) asparagine glycan is linked to Asn-517. Positions 523–553 (AFCKDGCRNGGACIAANVCACPQGFTGPSCE) constitute an EGF-like 4 domain. O-linked (GlcNAc...) threonine glycosylation occurs at Thr-548. The Ca(2+) site is built by Asp-555, Ile-556, and Glu-558. The 47-residue stretch at 555 to 601 (DIDECSDGFVQCDSRANCINLPGWYHCECRDGYHDNGMFSPSGESCE) folds into the EGF-like 5; calcium-binding domain. Disulfide bonds link Cys-559-Cys-572, Cys-566-Cys-581, and Cys-583-Cys-600. Asn-574, Leu-575, and Trp-578 together coordinate Ca(2+). Positions 602, 603, and 605 each coordinate Ca(2+). Residues 602 to 637 (DIDECGTGRHSCANDTICFNLDGGYDCRCPHGKNCT) enclose the EGF-like 6; calcium-binding domain. 3 disulfide bridges follow: Cys-606-Cys-619, Cys-613-Cys-628, and Cys-630-Cys-636. N-linked (GlcNAc...) asparagine glycosylation is present at Asn-615. Asn-621, Leu-622, and Gly-625 together coordinate Ca(2+). Residue Asn-635 is glycosylated (N-linked (GlcNAc...) asparagine). VWFC domains lie at 638–693 (GDCI…PECD) and 698–756 (SQCL…PRCV).

As to quaternary structure, homotrimer. Binds to PRKCB. Interacts with NICOL1; this interaction triggers epididymal differentiation. Interacts (via the EGF domains) with ROBO3 (via Fibronectin type-III 1 domain) with a 3:3 stoichiometry; this interaction promotes oligomerization of ROBO3 resulting in the repulsion of commissural axons in the midline.

The protein localises to the secreted. Its function is as follows. Plays multiple roles in neural tissues, regulates neuronal proliferation, survival, differentiation, polarization, as well as axon guidance and synaptic functions. Plays an important role in axon development during neuronal differentiation through the MAPK intracellular signaling pathway. Via binding to its receptor ROBO3, plays a role in axon guidance, functioning as a repulsive axon guidance cue that contributes to commissural axon guidance to the midline. Required for neuron survival through the modulation of MAPK signaling pathways too. Involved in the regulation of hypothalamic GNRH secretion and the control of puberty. In terms of biological role, epididymal-secreted protein that signals through a ROS1-pathway to regulate the epididymal initial segment (IS) maturation, sperm maturation and male fertility. This is Protein kinase C-binding protein NELL2 from Homo sapiens (Human).